A 540-amino-acid polypeptide reads, in one-letter code: Glucose-6-phosphate isomerase (540 aa).

The active-site Proton donor is the Glu350. Active-site residues include His381 and Lys503.

This sequence belongs to the GPI family.

Its subcellular location is the cytoplasm. The enzyme catalyses alpha-D-glucose 6-phosphate = beta-D-fructose 6-phosphate. The protein operates within carbohydrate biosynthesis; gluconeogenesis. It functions in the pathway carbohydrate degradation; glycolysis; D-glyceraldehyde 3-phosphate and glycerone phosphate from D-glucose: step 2/4. In terms of biological role, catalyzes the reversible isomerization of glucose-6-phosphate to fructose-6-phosphate. This chain is Glucose-6-phosphate isomerase, found in Burkholderia ambifaria (strain MC40-6).